A 542-amino-acid polypeptide reads, in one-letter code: Prolyl 4-hydroxylase subunit alpha-3 (542 aa).

Residues 1–24 form the signal peptide; the sequence is MGPGARLALLALLALGGDPAAATG. A coiled-coil region spans residues 105–129; it reads LEATENIRALKDGYEKVEQDLPAFE. The TPR repeat unit spans residues 225-258; that stretch reads EDALDYLAFACFQVGNVSCALSLSREFLVYSPDN. A glycan (N-linked (GlcNAc...) asparagine) is linked at Asn240. Residues 420-527 enclose the Fe2OG dioxygenase domain; it reads YAEYLQVVNY…KWVANKWIHE (108 aa). Fe cation contacts are provided by His438 and Asp440. N-linked (GlcNAc...) asparagine glycosylation is present at Asn480. Residue His508 participates in Fe cation binding. Residue Lys518 participates in 2-oxoglutarate binding.

Belongs to the P4HA family. In terms of assembly, heterotetramer of two alpha-3 chains and two beta chains (the beta chain is the multi-functional PDI). Fe(2+) serves as cofactor. The cofactor is L-ascorbate. N-glycosylation plays no role in the catalytic activity.

It is found in the endoplasmic reticulum lumen. It catalyses the reaction L-prolyl-[collagen] + 2-oxoglutarate + O2 = trans-4-hydroxy-L-prolyl-[collagen] + succinate + CO2. In terms of biological role, catalyzes the post-translational formation of 4-hydroxyproline in -Xaa-Pro-Gly- sequences in collagens and other proteins. The chain is Prolyl 4-hydroxylase subunit alpha-3 (P4ha3) from Mus musculus (Mouse).